Here is a 142-residue protein sequence, read N- to C-terminus: Succinate dehydrogenase subunit 6, mitochondrial (142 aa).

As to quaternary structure, component of complex II composed of eight subunits in plants: four classical SDH subunits SDH1, SDH2, SDH3 and SDH4 (a flavoprotein (FP), an iron-sulfur protein (IP), and a cytochrome b composed of a large and a small subunit.), as well as four subunits unknown in mitochondria from bacteria and heterotrophic eukaryotes.

It localises to the mitochondrion inner membrane. The protein operates within carbohydrate metabolism; tricarboxylic acid cycle. In Oryza sativa subsp. japonica (Rice), this protein is Succinate dehydrogenase subunit 6, mitochondrial.